The sequence spans 361 residues: Phosphoserine aminotransferase (361 aa).

L-glutamate is bound at residue R42. Pyridoxal 5'-phosphate contacts are provided by residues 76-77 (AR), W102, T153, D173, and Q196. The residue at position 197 (K197) is an N6-(pyridoxal phosphate)lysine. Position 238–239 (238–239 (NT)) interacts with pyridoxal 5'-phosphate.

Belongs to the class-V pyridoxal-phosphate-dependent aminotransferase family. SerC subfamily. In terms of assembly, homodimer. It depends on pyridoxal 5'-phosphate as a cofactor.

Its subcellular location is the cytoplasm. It carries out the reaction O-phospho-L-serine + 2-oxoglutarate = 3-phosphooxypyruvate + L-glutamate. The catalysed reaction is 4-(phosphooxy)-L-threonine + 2-oxoglutarate = (R)-3-hydroxy-2-oxo-4-phosphooxybutanoate + L-glutamate. It participates in amino-acid biosynthesis; L-serine biosynthesis; L-serine from 3-phospho-D-glycerate: step 2/3. It functions in the pathway cofactor biosynthesis; pyridoxine 5'-phosphate biosynthesis; pyridoxine 5'-phosphate from D-erythrose 4-phosphate: step 3/5. Catalyzes the reversible conversion of 3-phosphohydroxypyruvate to phosphoserine and of 3-hydroxy-2-oxo-4-phosphonooxybutanoate to phosphohydroxythreonine. In Pectobacterium atrosepticum (strain SCRI 1043 / ATCC BAA-672) (Erwinia carotovora subsp. atroseptica), this protein is Phosphoserine aminotransferase.